Here is a 269-residue protein sequence, read N- to C-terminus: Probable aquaporin TIP5-1 (269 aa).

5 helical membrane-spanning segments follow: residues Ala-19–Ile-39, Ser-54–Ala-74, Ala-84–Trp-104, Phe-139–Ala-159, and Ala-177–Leu-197. The NPA 1 motif lies at Asn-82 to Ala-84. The NPA 2 motif lies at Asn-203–Ala-205. Residues Tyr-223–Phe-243 form a helical membrane-spanning segment.

It belongs to the MIP/aquaporin (TC 1.A.8) family. TIP (TC 1.A.8.10) subfamily. Expressed in leaves and anthers, and at lower levels in roots.

The protein resides in the vacuole membrane. Functionally, aquaporins facilitate the transport of water and small neutral solutes across cell membranes. May be involved in transport from the vacuolar compartment to the cytoplasm. This is Probable aquaporin TIP5-1 (TIP5;1) from Oryza sativa subsp. japonica (Rice).